We begin with the raw amino-acid sequence, 57 residues long: Large ribosomal subunit protein bL33 (57 aa).

Belongs to the bacterial ribosomal protein bL33 family.

The polypeptide is Large ribosomal subunit protein bL33 (Shewanella pealeana (strain ATCC 700345 / ANG-SQ1)).